A 172-amino-acid chain; its full sequence is MSQKLLPISPLQLLFLQCLLIGFTAAYPYLIFPASPSSGDSRRLVKRAFDRFDNSGVFSFGAKRFDRYDDETAYGYGFDNHIFKRSADPYRFMSVPTKKAFDRMDNSDFFGAKRKRSFDRMGGTEFGLMKRSAPESREQLINNLAESIITLRRAREAESSPESQRTIITYDD.

An N-terminal signal peptide occupies residues 1–26 (MSQKLLPISPLQLLFLQCLLIGFTAA).

Post-translationally, may be processed by convertase egl-3.

The protein resides in the secreted. Functionally, neuropeptide-like protein. Plays a role in behaviors associated with a sleep-like state induced by stress (SIS), acting in concert with the FARP (FMRFamide related) peptides, flp-13 and flp-24. The protein is Neuropeptide-like protein nlp-8 of Caenorhabditis elegans.